We begin with the raw amino-acid sequence, 490 residues long: MLEYGFKDDSLSLHTDLYQINMAETYWRDGIHEKKAIFELFFRRLPFENGYAVFAGLEKAIEYLENFKFTDSDLSYLQDELGYHEDFIEYLRGLSFTGSLYSMKEGELVFNNEPIMRVEAPLVEAQLIETALLNIVNYQTLIATKAARIKGVIGDEVALEFGTRRAHEMDAAMWGARAALIGGFSATSNVRAGKRFNIPVSGTHAHALVQAYRDEYTAFKKYAETHKDCVFLVDTYDTLRSGMPNAIRVAKEFGDRINFIGIRLDSGDLAYLSKKARKMLDEAGFTDAKVIASSDLDEHTIMNLKAQGARIDVWGVGTKLITAYDQPALGAVYKLVAIEEDGKMVDTIKISSNPEKVTTPGRKKVYRIINQSNHHSEGDYIALYDEQVNDQKRLRMFHPVHTFISKFVTNFYAKDLHELIFEKGILCYQNPEISDIQQYVQDNLSLLWEEYKRISKPEEYPVDLSEDCWSNKMQRIHEVKSRIEEELEEE.

H206 is modified (phosphohistidine).

Belongs to the NAPRTase family. Post-translationally, transiently phosphorylated on a His residue during the reaction cycle. Phosphorylation strongly increases the affinity for substrates and increases the rate of nicotinate D-ribonucleotide production. Dephosphorylation regenerates the low-affinity form of the enzyme, leading to product release.

The catalysed reaction is nicotinate + 5-phospho-alpha-D-ribose 1-diphosphate + ATP + H2O = nicotinate beta-D-ribonucleotide + ADP + phosphate + diphosphate. It participates in cofactor biosynthesis; NAD(+) biosynthesis; nicotinate D-ribonucleotide from nicotinate: step 1/1. Its function is as follows. Catalyzes the synthesis of beta-nicotinate D-ribonucleotide from nicotinate and 5-phospho-D-ribose 1-phosphate at the expense of ATP. This chain is Nicotinate phosphoribosyltransferase (pncB), found in Bacillus subtilis (strain 168).